A 365-amino-acid polypeptide reads, in one-letter code: 3-isopropylmalate dehydrogenase (365 aa).

78-91 (GPKWDTLPAEERPE) is a binding site for NAD(+). Arg-99, Arg-109, Arg-138, and Asp-227 together coordinate substrate. Mg(2+) contacts are provided by Asp-227, Asp-251, and Asp-255. 285 to 297 (GSAPDIAGKNIAN) is an NAD(+) binding site.

The protein belongs to the isocitrate and isopropylmalate dehydrogenases family. LeuB type 1 subfamily. Homodimer. Requires Mg(2+) as cofactor. Mn(2+) serves as cofactor.

The protein localises to the cytoplasm. The enzyme catalyses (2R,3S)-3-isopropylmalate + NAD(+) = 4-methyl-2-oxopentanoate + CO2 + NADH. The protein operates within amino-acid biosynthesis; L-leucine biosynthesis; L-leucine from 3-methyl-2-oxobutanoate: step 3/4. In terms of biological role, catalyzes the oxidation of 3-carboxy-2-hydroxy-4-methylpentanoate (3-isopropylmalate) to 3-carboxy-4-methyl-2-oxopentanoate. The product decarboxylates to 4-methyl-2 oxopentanoate. The sequence is that of 3-isopropylmalate dehydrogenase from Syntrophotalea carbinolica (strain DSM 2380 / NBRC 103641 / GraBd1) (Pelobacter carbinolicus).